The primary structure comprises 232 residues: Peroxiredoxin (232 aa).

Residues 6 to 161 (PSIGEKFPEI…ILRLIESLQI (156 aa)) form the Thioredoxin domain. The Cysteine sulfenic acid (-SOH) intermediate role is filled by Cys48. Arg124 lines the substrate pocket. Residues Cys203 and Cys209 are joined by a disulfide bond.

It belongs to the peroxiredoxin family. Prx6 subfamily. In terms of assembly, homodecamer. Pentamer of dimers that assemble into a ring structure.

Its subcellular location is the cytoplasm. The enzyme catalyses a hydroperoxide + [thioredoxin]-dithiol = an alcohol + [thioredoxin]-disulfide + H2O. In terms of biological role, thiol-specific peroxidase that catalyzes the reduction of hydrogen peroxide and organic hydroperoxides to water and alcohols, respectively. Plays a role in cell protection against oxidative stress by detoxifying peroxides. In Hyperthermus butylicus (strain DSM 5456 / JCM 9403 / PLM1-5), this protein is Peroxiredoxin.